The chain runs to 58 residues: UPF0391 membrane protein Plav_0056 (58 aa).

Helical transmembrane passes span 4–24 and 30–50; these read WAAVFFIIAVIAAVLGFGGLV and IAQILFFIFLVLFVVSLIFGV.

Belongs to the UPF0391 family.

It localises to the cell membrane. The chain is UPF0391 membrane protein Plav_0056 from Parvibaculum lavamentivorans (strain DS-1 / DSM 13023 / NCIMB 13966).